Here is a 458-residue protein sequence, read N- to C-terminus: Phosphoglucosamine mutase (458 aa).

Ser-108 functions as the Phosphoserine intermediate in the catalytic mechanism. Positions 108, 247, 249, and 251 each coordinate Mg(2+). Residue Ser-108 is modified to Phosphoserine.

It belongs to the phosphohexose mutase family. The cofactor is Mg(2+). In terms of processing, activated by phosphorylation.

The catalysed reaction is alpha-D-glucosamine 1-phosphate = D-glucosamine 6-phosphate. In terms of biological role, catalyzes the conversion of glucosamine-6-phosphate to glucosamine-1-phosphate. The polypeptide is Phosphoglucosamine mutase (Nitrosomonas eutropha (strain DSM 101675 / C91 / Nm57)).